The chain runs to 399 residues: Yellow-related salivary protein LJM11 (399 aa).

The N-terminal stretch at 1–18 is a signal peptide; that stretch reads MKVFFSIFTLVLFQGTLG. Cys-115 and Cys-186 form a disulfide bridge. Asn-213 is a glycosylation site (N-linked (GlcNAc...) asparagine). Cys-319 and Cys-395 are oxidised to a cystine. Serotonin contacts are provided by Thr-345, Asn-360, and Phe-362.

It belongs to the major royal jelly protein family. As to expression, salivary gland (at protein level).

It localises to the secreted. Functionally, probably modulates blood feeding of sand flies on vertebrate species by binding and sequestering different mediators involved in the host response. Binds biogenic amines. Binds serotonin with high affinity. Binds adrenaline and noradrenaline. Binds dopamine and octopamine. Poorly binds histamine. Induces a delayed type hypersensitivity response in host tissues. Induces systemic Th1 immune response in the host. Immunogenic; elicits antibody production in the host. Functions as a chemoattractant for host neutrophils; likely acts through a G-protein-coupled receptor and effect is dependent on calcium influx. (Microbial infection) Modulates infection caused by Leishmania species in the host. This Lutzomyia longipalpis (Sand fly) protein is Yellow-related salivary protein LJM11.